The chain runs to 496 residues: Glutamyl-tRNA(Gln) amidotransferase subunit A (496 aa).

Active-site charge relay system residues include Lys75 and Ser150. Catalysis depends on Ser174, which acts as the Acyl-ester intermediate.

This sequence belongs to the amidase family. GatA subfamily. As to quaternary structure, heterotrimer of A, B and C subunits.

The enzyme catalyses L-glutamyl-tRNA(Gln) + L-glutamine + ATP + H2O = L-glutaminyl-tRNA(Gln) + L-glutamate + ADP + phosphate + H(+). Its function is as follows. Allows the formation of correctly charged Gln-tRNA(Gln) through the transamidation of misacylated Glu-tRNA(Gln) in organisms which lack glutaminyl-tRNA synthetase. The reaction takes place in the presence of glutamine and ATP through an activated gamma-phospho-Glu-tRNA(Gln). The chain is Glutamyl-tRNA(Gln) amidotransferase subunit A from Burkholderia vietnamiensis (strain G4 / LMG 22486) (Burkholderia cepacia (strain R1808)).